We begin with the raw amino-acid sequence, 492 residues long: Auxin transporter-like protein 1 (492 aa).

At Met1 to Gln67 the chain is on the cytoplasmic side. A helical membrane pass occupies residues Val68–Leu85. Residues Ser86 to Gly87 are Extracellular-facing. The chain crosses the membrane as a helical span at residues Val88–Leu108. The Cytoplasmic portion of the chain corresponds to Tyr109–Lys143. The chain crosses the membrane as a helical span at residues Ala144–Ala164. Residues Cys165–Thr180 are Extracellular-facing. The helical transmembrane segment at Trp181 to Tyr201 threads the bilayer. Residue Arg202 is a topological domain, cytoplasmic. The chain crosses the membrane as a helical span at residues Ile203–Ala223. Residues Leu224–Leu240 lie on the Extracellular side of the membrane. A helical transmembrane segment spans residues Val241–Val261. Residues Glu262 to Lys274 are Cytoplasmic-facing. A helical membrane pass occupies residues Tyr275 to Met295. Over Tyr296 to Ala322 the chain is Extracellular. A helical transmembrane segment spans residues Val323–Phe343. Residues Val344–Arg364 lie on the Cytoplasmic side of the membrane. The chain crosses the membrane as a helical span at residues Leu365–Asn385. Residue Ser386 is a topological domain, extracellular. A helical transmembrane segment spans residues Ala387 to Leu407. Topologically, residues Thr408–Met432 are cytoplasmic. Residues Phe433–Trp453 traverse the membrane as a helical segment. Topologically, residues Ala454–His492 are extracellular.

It belongs to the amino acid/polyamine transporter 2 family. Amino acid/auxin permease (AAAP) (TC 2.A.18.1) subfamily.

It localises to the cell membrane. Carrier protein involved in proton-driven auxin influx. May mediate the formation of auxin gradient from developing leaves (site of auxin biosynthesis) to tips. This Oryza sativa subsp. japonica (Rice) protein is Auxin transporter-like protein 1.